We begin with the raw amino-acid sequence, 190 residues long: Imidazoleglycerol-phosphate dehydratase (190 aa).

This sequence belongs to the imidazoleglycerol-phosphate dehydratase family.

The protein resides in the cytoplasm. It carries out the reaction D-erythro-1-(imidazol-4-yl)glycerol 3-phosphate = 3-(imidazol-4-yl)-2-oxopropyl phosphate + H2O. Its pathway is amino-acid biosynthesis; L-histidine biosynthesis; L-histidine from 5-phospho-alpha-D-ribose 1-diphosphate: step 6/9. In Methanococcus vannielii (strain ATCC 35089 / DSM 1224 / JCM 13029 / OCM 148 / SB), this protein is Imidazoleglycerol-phosphate dehydratase.